The chain runs to 362 residues: S-adenosylmethionine:tRNA ribosyltransferase-isomerase (362 aa).

The protein belongs to the QueA family. In terms of assembly, monomer.

The protein localises to the cytoplasm. It catalyses the reaction 7-aminomethyl-7-carbaguanosine(34) in tRNA + S-adenosyl-L-methionine = epoxyqueuosine(34) in tRNA + adenine + L-methionine + 2 H(+). The protein operates within tRNA modification; tRNA-queuosine biosynthesis. Functionally, transfers and isomerizes the ribose moiety from AdoMet to the 7-aminomethyl group of 7-deazaguanine (preQ1-tRNA) to give epoxyqueuosine (oQ-tRNA). This is S-adenosylmethionine:tRNA ribosyltransferase-isomerase from Methylobacterium sp. (strain 4-46).